The primary structure comprises 345 residues: UDP-N-acetylenolpyruvoylglucosamine reductase (345 aa).

The region spanning 27 to 197 (FDASAELAYE…TKVVFKLPKQ (171 aa)) is the FAD-binding PCMH-type domain. Arg174 is an active-site residue. The active-site Proton donor is the Ser245. Residue Glu341 is part of the active site.

It belongs to the MurB family. FAD is required as a cofactor.

The protein localises to the cytoplasm. The catalysed reaction is UDP-N-acetyl-alpha-D-muramate + NADP(+) = UDP-N-acetyl-3-O-(1-carboxyvinyl)-alpha-D-glucosamine + NADPH + H(+). The protein operates within cell wall biogenesis; peptidoglycan biosynthesis. Cell wall formation. This is UDP-N-acetylenolpyruvoylglucosamine reductase from Polynucleobacter asymbioticus (strain DSM 18221 / CIP 109841 / QLW-P1DMWA-1) (Polynucleobacter necessarius subsp. asymbioticus).